We begin with the raw amino-acid sequence, 374 residues long: UDP-N-acetylglucosamine--N-acetylmuramyl-(pentapeptide) pyrophosphoryl-undecaprenol N-acetylglucosamine transferase (374 aa).

UDP-N-acetyl-alpha-D-glucosamine-binding positions include 10–12, Asn-124, Arg-166, Ser-196, and Gln-294; that span reads TGG.

Belongs to the glycosyltransferase 28 family. MurG subfamily.

The protein localises to the cell membrane. It carries out the reaction di-trans,octa-cis-undecaprenyl diphospho-N-acetyl-alpha-D-muramoyl-L-alanyl-D-glutamyl-meso-2,6-diaminopimeloyl-D-alanyl-D-alanine + UDP-N-acetyl-alpha-D-glucosamine = di-trans,octa-cis-undecaprenyl diphospho-[N-acetyl-alpha-D-glucosaminyl-(1-&gt;4)]-N-acetyl-alpha-D-muramoyl-L-alanyl-D-glutamyl-meso-2,6-diaminopimeloyl-D-alanyl-D-alanine + UDP + H(+). It functions in the pathway cell wall biogenesis; peptidoglycan biosynthesis. Its function is as follows. Cell wall formation. Catalyzes the transfer of a GlcNAc subunit on undecaprenyl-pyrophosphoryl-MurNAc-pentapeptide (lipid intermediate I) to form undecaprenyl-pyrophosphoryl-MurNAc-(pentapeptide)GlcNAc (lipid intermediate II). The sequence is that of UDP-N-acetylglucosamine--N-acetylmuramyl-(pentapeptide) pyrophosphoryl-undecaprenol N-acetylglucosamine transferase from Symbiobacterium thermophilum (strain DSM 24528 / JCM 14929 / IAM 14863 / T).